The primary structure comprises 654 residues: Peptide-N(4)-(N-acetyl-beta-glucosaminyl)asparagine amidase (654 aa).

Ala2 bears the N-acetylalanine mark. The PUB domain maps to 30 to 91 (EASKLLLTYA…EGETHLIFPK (62 aa)). The disordered stretch occupies residues 112–163 (RLDGSNKSHKVKSSQQPAASTQLPTTPSSNPSGLNQHTRNRQGQSSDPPSAS). The span at 124 to 163 (SSQQPAASTQLPTTPSSNPSGLNQHTRNRQGQSSDPPSAS) shows a compositional bias: polar residues. A Phosphothreonine modification is found at Thr137. 4 residues coordinate Zn(2+): Cys250, Cys253, Cys283, and Cys286. The Nucleophile role is filled by Cys309. Active-site residues include His336 and Asp353. Positions 454-654 (ELGGRISGSV…LEIIIKFSDL (201 aa)) constitute a PAW domain.

This sequence belongs to the transglutaminase-like superfamily. PNGase family. In terms of assembly, component of a complex required to couple retrotranslocation, ubiquitination and deglycosylation composed of NGLY1, SAKS1, AMFR, VCP and RAD23B. Interacts with the proteasome components RAD23B and PSMC1. Interacts with directly with VCP. Interacts with DERL1, bringing it close to the endoplasmic reticulum membrane. Interacts with SAKS1. It depends on Zn(2+) as a cofactor.

It localises to the cytoplasm. It catalyses the reaction Hydrolysis of an N(4)-(acetyl-beta-D-glucosaminyl)asparagine residue in which the glucosamine residue may be further glycosylated, to yield a (substituted) N-acetyl-beta-D-glucosaminylamine and a peptide containing an aspartate residue.. Inhibited by Z-VAD-fmk, a well-known caspase inhibitor, which inhibits enzyme activity through covalent binding of the carbohydrate to the single Cys-306 residue. Specifically deglycosylates the denatured form of N-linked glycoproteins in the cytoplasm and assists their proteasome-mediated degradation. Cleaves the beta-aspartyl-glucosamine (GlcNAc) of the glycan and the amide side chain of Asn, converting Asn to Asp. Prefers proteins containing high-mannose over those bearing complex type oligosaccharides. Can recognize misfolded proteins in the endoplasmic reticulum that are exported to the cytosol to be destroyed and deglycosylate them, while it has no activity toward native proteins. Deglycosylation is a prerequisite for subsequent proteasome-mediated degradation of some, but not all, misfolded glycoproteins. This is Peptide-N(4)-(N-acetyl-beta-glucosaminyl)asparagine amidase (NGLY1) from Homo sapiens (Human).